Here is a 376-residue protein sequence, read N- to C-terminus: Rhodopsin (376 aa).

Residues 1–52 lie on the Extracellular side of the membrane; the sequence is MSSWSNQPAMDDYGLPSSNPYGNFTVVDMAPKDILHMIHPHWYQYPPMNPMM. The N-linked (GlcNAc...) asparagine glycan is linked to Asn-23. The helical transmembrane segment at 53 to 77 threads the bilayer; sequence YPLLLIFMLFTGILCLAGNFVTIWV. Over 78–89 the chain is Cytoplasmic; that stretch reads FMNTKSLRTPAN. A helical membrane pass occupies residues 90-112; it reads LLVVNLAMSDFLMMFTMFPPMMV. The Extracellular portion of the chain corresponds to 113–126; sequence TCYYHTWTLGPTFC. Cys-126 and Cys-203 are oxidised to a cystine. The helical transmembrane segment at 127–149 threads the bilayer; sequence QVYAFLGNLCGCASIWTMVFITF. Positions 150–152 match the 'Ionic lock' involved in activated form stabilization motif; it reads DRY. The Cytoplasmic segment spans residues 150 to 168; it reads DRYNVIVKGVAGEPLSTKK. A helical membrane pass occupies residues 169 to 189; that stretch reads ASLWILTIWVLSITWCIAPFF. Residues 190 to 216 are Extracellular-facing; it reads GWNRYVPEGNLTGCGTDYLSEDILSRS. An N-linked (GlcNAc...) asparagine glycan is attached at Asn-199. The chain crosses the membrane as a helical span at residues 217–237; that stretch reads YLYDYSTWVYYLPLLPIYCYV. The Cytoplasmic segment spans residues 238–278; that stretch reads SIIKAVAAHEKGMRDQAKKMGIKSLRNEEAQKTSAECRLAK. The helical transmembrane segment at 279 to 300 threads the bilayer; sequence IAMTTVALWFIAWTPYLLINWV. Residues 301-311 lie on the Extracellular side of the membrane; it reads GMFARSYLSPV. The helical transmembrane segment at 312-333 threads the bilayer; it reads YTIWGYVFAKANAVYNPIVYAI. N6-(retinylidene)lysine is present on Lys-321. Residues 334–376 lie on the Cytoplasmic side of the membrane; the sequence is SHPKYRAAMEKKLPCLSCKTESDDVSESASTTTSSAEEKAESA. The tract at residues 353–376 is disordered; it reads TESDDVSESASTTTSSAEEKAESA.

The protein belongs to the G-protein coupled receptor 1 family. Opsin subfamily. In terms of assembly, homodimer. Interacts with GNAQ. Contains one covalently linked retinal chromophore. As to expression, detected on rhabdomere membranes on photoreceptor cells in the retina (at protein level).

Its subcellular location is the cell projection. The protein localises to the rhabdomere membrane. Photoreceptor required for image-forming vision at low light intensity. Can use both retinal and 3-dehydroretinal as visual pigment. Light-induced isomerization of 11-cis to all-trans retinal triggers a conformational change that activates signaling via G-proteins. Signaling via GNAQ probably mediates the activation of phospholipase C. The polypeptide is Rhodopsin (RHO) (Procambarus clarkii (Red swamp crayfish)).